The following is a 1451-amino-acid chain: Transcription elongation factor SPT6 (1451 aa).

A compositionally biased stretch (basic and acidic residues) spans 1–12; it reads MEETGDSKLVPR. The tract at residues 1–217 is disordered; that stretch reads MEETGDSKLV…EDDETRQRRI (217 aa). A Nuclear localization signal motif is present at residues 8 to 12; that stretch reads KLVPR. The span at 29-51 shows a compositional bias: acidic residues; it reads EEEEGEDVFDSSEEDEDIDEDED. Residues 76–85 are compositionally biased toward basic residues; sequence SKKRRKHKRR. Residues 77-85 carry the Nuclear localization signal motif; the sequence is KKRRKHKRR. The span at 88 to 100 shows a compositional bias: acidic residues; sequence EEDDRLSEDDLDL. Residue serine 94 is modified to Phosphoserine. Residues 120-125 carry the Nuclear localization signal motif; sequence KRLKRV. A phosphoserine mark is found at serine 134, serine 136, serine 148, and serine 155. Residues 153–162 show a composition bias toward acidic residues; it reads FFSEDEEEEE. A compositionally biased stretch (basic and acidic residues) spans 180 to 192; the sequence is HENRNRTADKGGI. Acidic residues predominate over residues 194–211; it reads DELDDFIEDDEFSDEDDE. Phosphoserine is present on residues serine 206 and serine 295. The region spanning 1257–1354 is the SH2 domain; it reads PYYFPFNGRQ…RLLNEMTSSE (98 aa).

The protein belongs to the SPT6 family. As to quaternary structure, interacts with CTR9.

The protein resides in the nucleus. It is found in the chromosome. Its function is as follows. Histone H3-H4 chaperone that plays a role in maintenance of chromatin structure during RNA polymerase II transcription elongation thereby repressing transcription initiation from cryptic promoters. Mediates the reassembly of nucleosomes onto the promoters of at least a selected set of genes during repression; the nucleosome reassembly is essential for transcriptional repression. Essential for viability. This is Transcription elongation factor SPT6 (SPT6) from Saccharomyces cerevisiae (strain ATCC 204508 / S288c) (Baker's yeast).